Consider the following 1199-residue polypeptide: Nucleolar protein 6 (1199 aa).

The span at M1–K10 shows a compositional bias: basic residues. Disordered regions lie at residues M1–P51 and K1146–K1199. Basic and acidic residues-rich tracts occupy residues H28–H37 and K1146–T1169.

The protein belongs to the NRAP family. As to quaternary structure, part of the small subunit (SSU) processome, composed of more than 70 proteins and the RNA chaperone small nucleolar RNA (snoRNA) U3.

Its subcellular location is the nucleus. It is found in the nucleolus. The protein localises to the chromosome. Its function is as follows. Part of the small subunit (SSU) processome, first precursor of the small eukaryotic ribosomal subunit. During the assembly of the SSU processome in the nucleolus, many ribosome biogenesis factors, an RNA chaperone and ribosomal proteins associate with the nascent pre-rRNA and work in concert to generate RNA folding, modifications, rearrangements and cleavage as well as targeted degradation of pre-ribosomal RNA by the RNA exosome. This is Nucleolar protein 6 from Drosophila yakuba (Fruit fly).